A 303-amino-acid chain; its full sequence is Elongation factor Ts (303 aa).

The involved in Mg(2+) ion dislocation from EF-Tu stretch occupies residues 80–83; the sequence is TDFV.

It belongs to the EF-Ts family.

It is found in the cytoplasm. Associates with the EF-Tu.GDP complex and induces the exchange of GDP to GTP. It remains bound to the aminoacyl-tRNA.EF-Tu.GTP complex up to the GTP hydrolysis stage on the ribosome. This chain is Elongation factor Ts, found in Clostridium perfringens (strain SM101 / Type A).